A 349-amino-acid chain; its full sequence is Xylitol-binding protein (349 aa).

An N-terminal signal peptide occupies residues 1-22 (MNITSKIGAIAAAGAVGLGLTA). A lipid anchor (N-palmitoyl cysteine) is attached at Cys23. The S-diacylglycerol cysteine moiety is linked to residue Cys23. 6 residues coordinate xylitol: Tyr42, Asn121, Arg173, Asn224, Asp249, and Gln269.

This sequence belongs to the bacterial solute-binding protein 2 family.

It localises to the cell membrane. In terms of biological role, part of an ABC transporter complex likely involved in xylitol import. Binds xylitol. This is Xylitol-binding protein from Mycolicibacterium smegmatis (strain ATCC 700084 / mc(2)155) (Mycobacterium smegmatis).